The primary structure comprises 338 residues: Lipoate-protein ligase A (338 aa).

One can recognise a BPL/LPL catalytic domain in the interval 29-216 (PADQRVLFLW…AYCEHYQQQV (188 aa)). ATP is bound by residues Arg71, 76-79 (GAVF), and Lys134. Lys134 serves as a coordination point for (R)-lipoate.

Belongs to the LplA family. Monomer.

It is found in the cytoplasm. The catalysed reaction is L-lysyl-[lipoyl-carrier protein] + (R)-lipoate + ATP = N(6)-[(R)-lipoyl]-L-lysyl-[lipoyl-carrier protein] + AMP + diphosphate + H(+). Its pathway is protein modification; protein lipoylation via exogenous pathway; protein N(6)-(lipoyl)lysine from lipoate: step 1/2. The protein operates within protein modification; protein lipoylation via exogenous pathway; protein N(6)-(lipoyl)lysine from lipoate: step 2/2. Catalyzes both the ATP-dependent activation of exogenously supplied lipoate to lipoyl-AMP and the transfer of the activated lipoyl onto the lipoyl domains of lipoate-dependent enzymes. This Vibrio cholerae serotype O1 (strain ATCC 39541 / Classical Ogawa 395 / O395) protein is Lipoate-protein ligase A.